Here is a 1525-residue protein sequence, read N- to C-terminus: Dicer-like protein 1 (1525 aa).

Residues 37–52 show a composition bias toward acidic residues; it reads DLQEDDGSSDESDNDE. The segment at 37–65 is disordered; it reads DLQEDDGSSDESDNDEREDHSKTGVSQQR. Residues 124 to 305 enclose the Helicase ATP-binding domain; sequence LFERAKVQNT…DEATRLEKLL (182 aa). 137 to 144 contacts ATP; sequence LDTGSGKT. Residues 250–253 carry the DEAH box motif; the sequence is DEAH. Residues 439–605 enclose the Helicase C-terminal domain; that stretch reads QLSPKVQVLR…SFCRTLPEDR (167 aa). A Dicer dsRNA-binding fold domain is found at 641–731; sequence ATAILARYAS…NSIYHRRLPA (91 aa). The PAZ domain maps to 881–1009; the sequence is ESLTYVRDND…ICIEPLKVSA (129 aa). 2 RNase III domains span residues 1032 to 1192 and 1243 to 1394; these read LISL…LSGG and SRKI…VDSD. Positions 1283, 1380, and 1383 each coordinate Mg(2+). The region spanning 1428–1496 is the DRBM domain; it reads TFLHNRLTNE…SEKALAVLDE (69 aa). Zn(2+)-binding residues include C1440, H1467, C1508, and C1510.

It belongs to the helicase family. Dicer subfamily. Mg(2+) is required as a cofactor. Mn(2+) serves as cofactor.

Functionally, dicer-like endonuclease involved in cleaving double-stranded RNA in the RNA interference (RNAi) pathway. Produces 21 to 25 bp dsRNAs (siRNAs) which target the selective destruction of homologous RNAs leading to sequence-specific suppression of gene expression, called post-transcriptional gene silencing (PTGS). Part of a broad host defense response against viral infection and transposons. This is Dicer-like protein 1 (dcl1) from Aspergillus niger (strain ATCC MYA-4892 / CBS 513.88 / FGSC A1513).